The following is a 444-amino-acid chain: 3-isopropylmalate dehydratase large subunit (444 aa).

[4Fe-4S] cluster-binding residues include cysteine 348, cysteine 408, and cysteine 411.

This sequence belongs to the aconitase/IPM isomerase family. LeuC type 1 subfamily. Heterodimer of LeuC and LeuD. [4Fe-4S] cluster is required as a cofactor.

It catalyses the reaction (2R,3S)-3-isopropylmalate = (2S)-2-isopropylmalate. The protein operates within amino-acid biosynthesis; L-leucine biosynthesis; L-leucine from 3-methyl-2-oxobutanoate: step 2/4. Its function is as follows. Catalyzes the isomerization between 2-isopropylmalate and 3-isopropylmalate, via the formation of 2-isopropylmaleate. The polypeptide is 3-isopropylmalate dehydratase large subunit (Buchnera aphidicola subsp. Uroleucon ambrosiae).